The primary structure comprises 354 residues: Probable RNA methyltransferase AZOSEA28700 (354 aa).

The Proton acceptor role is filled by E88. A Radical SAM core domain is found at L91–D317. Cysteines 98 and 322 form a disulfide. Residues C105, C109, and C112 each contribute to the [4Fe-4S] cluster site. S-adenosyl-L-methionine is bound by residues G150–E151, S180, S203–H205, and N279. Catalysis depends on C322, which acts as the S-methylcysteine intermediate.

It belongs to the radical SAM superfamily. RlmN family. [4Fe-4S] cluster is required as a cofactor.

It is found in the cytoplasm. The sequence is that of Probable RNA methyltransferase AZOSEA28700 from Aromatoleum aromaticum (strain DSM 19018 / LMG 30748 / EbN1) (Azoarcus sp. (strain EbN1)).